The chain runs to 444 residues: Pestheic acid cluster transcriptional regulator 2 (444 aa).

A compositionally biased stretch (polar residues) spans 1 to 22; that stretch reads MEAADPNNNLTITSPSTLLSNP. Residues 1 to 31 are disordered; the sequence is MEAADPNNNLTITSPSTLLSNPTQPPAQPLK. Positions 36–63 form a DNA-binding region, zn(2)-C6 fungal-type; sequence CHACASSKVKCHKEKPTCSRCRKRGITC. The disordered stretch occupies residues 326 to 348; sequence ARVGSGVSTHTTAGQYEPQVEQQ. Over residues 331–348 the composition is skewed to polar residues; the sequence is GVSTHTTAGQYEPQVEQQ.

Its subcellular location is the nucleus. Functionally, transcription factor that, with ptaR1 and ptaR3, coregulates the expression of the gene cluster that mediates the biosynthesis of pestheic acid, a diphenyl ether which is a biosynthetic precursor of the unique chloropupukeananes. This chain is Pestheic acid cluster transcriptional regulator 2, found in Pestalotiopsis fici (strain W106-1 / CGMCC3.15140).